The chain runs to 364 residues: Succinyl-diaminopimelate desuccinylase (364 aa).

Position 66 (His66) interacts with Zn(2+). Asp68 is a catalytic residue. Asp97 contributes to the Zn(2+) binding site. Glu127 (proton acceptor) is an active-site residue. Residues Glu128, Glu156, and His341 each coordinate Zn(2+).

Belongs to the peptidase M20A family. DapE subfamily. Homodimer. It depends on Zn(2+) as a cofactor. The cofactor is Co(2+).

The enzyme catalyses N-succinyl-(2S,6S)-2,6-diaminopimelate + H2O = (2S,6S)-2,6-diaminopimelate + succinate. The protein operates within amino-acid biosynthesis; L-lysine biosynthesis via DAP pathway; LL-2,6-diaminopimelate from (S)-tetrahydrodipicolinate (succinylase route): step 3/3. In terms of biological role, catalyzes the hydrolysis of N-succinyl-L,L-diaminopimelic acid (SDAP), forming succinate and LL-2,6-diaminopimelate (DAP), an intermediate involved in the bacterial biosynthesis of lysine and meso-diaminopimelic acid, an essential component of bacterial cell walls. The sequence is that of Succinyl-diaminopimelate desuccinylase from Wolinella succinogenes (strain ATCC 29543 / DSM 1740 / CCUG 13145 / JCM 31913 / LMG 7466 / NCTC 11488 / FDC 602W) (Vibrio succinogenes).